The sequence spans 407 residues: Gonadotropin-releasing hormone receptor (407 aa).

The Extracellular segment spans residues 1–36; that stretch reads MDYLNDSMFNNMTYNITSTPLPDAPRFDNVYVSKLC. 3 N-linked (GlcNAc...) asparagine glycosylation sites follow: N5, N11, and N15. The chain crosses the membrane as a helical span at residues 37–57; that stretch reads VLGTVFVISFFGNTLVIIQIF. At 58–69 the chain is on the cytoplasmic side; that stretch reads RIRGSRSTIQSL. The chain crosses the membrane as a helical span at residues 70–90; the sequence is ILNLAIADLMVSFFNILMDII. At 91-105 the chain is on the extracellular side; that stretch reads WSATVEWLAGNTMCK. Residues C104 and C183 are joined by a disulfide bond. A helical membrane pass occupies residues 106–126; sequence IMKYLTVFGLHLSTYITVSIA. Residues 127–147 are Cytoplasmic-facing; that stretch reads LDRCFAILSPMSRSKAPLRVR. The chain crosses the membrane as a helical span at residues 148-168; the sequence is IMITMAWVLSAIFSIPQAVIF. Residues 169–199 are Extracellular-facing; sequence QEQRKMFRQGMFHQCRDSYNALWQKQLYSAS. Residues 200-220 traverse the membrane as a helical segment; sequence SLILLFVIPLIIMVTSYLLIL. Over 221–268 the chain is Cytoplasmic; it reads KTIVKTSRQFHDTPISPTSMSCYSVNHGQIRTHLFERARKRSSRMSAV. The helical transmembrane segment at 269 to 289 threads the bilayer; it reads IVAAFILCWTPYYIIFLGFAF. Residues 290–298 are Extracellular-facing; the sequence is FQWDNSRTV. The chain crosses the membrane as a helical span at residues 299–319; sequence IYFFTLGTSNCMLNPLIYGAF. At 320–407 the chain is on the cytoplasmic side; sequence TIYKVHRGRS…NGKMPTKPPG (88 aa). The tract at residues 377 to 407 is disordered; the sequence is SLTNPHQPVRPSPGINSTTSPNGKMPTKPPG.

Belongs to the G-protein coupled receptor 1 family. As to expression, widely expressed in peripheral nervous tissue, gonadal tissue and brain. In the brain, expression is high in the palliovisceral lobe and superior buccal lobe but low in the subvertical lobe, superior and inferior frontal lobe, posterior brachial lobe and pedal lobe. Expressed in stomach, rectum, aorta, heart, salivary gland, branchia, pancreas, radula retractor muscle, branchial vessel but not in white body, esophagus, liver and kidney.

The protein resides in the cell membrane. In terms of biological role, receptor for gonadotropin releasing hormone (GnRH) that mediates the action of GnRH to stimulate the secretion of the gonadotropic hormones luteinizing hormone (LH) and follicle-stimulating hormone (FSH). This receptor mediates its action by association with G-proteins that activate a phosphatidylinositol-calcium second messenger system. Ligand interaction triggers steroidogenesis in spermatozoa and follicles. Appears to be involved in contraction of the radula retractor muscle. In Octopus vulgaris (Common octopus), this protein is Gonadotropin-releasing hormone receptor.